The chain runs to 448 residues: Exodeoxyribonuclease 7 large subunit (448 aa).

The protein belongs to the XseA family. Heterooligomer composed of large and small subunits.

It is found in the cytoplasm. It carries out the reaction Exonucleolytic cleavage in either 5'- to 3'- or 3'- to 5'-direction to yield nucleoside 5'-phosphates.. Functionally, bidirectionally degrades single-stranded DNA into large acid-insoluble oligonucleotides, which are then degraded further into small acid-soluble oligonucleotides. In Enterococcus faecalis (strain ATCC 700802 / V583), this protein is Exodeoxyribonuclease 7 large subunit.